The primary structure comprises 189 residues: Parkinson disease protein 7 homolog (189 aa).

Alanine 2 carries the N-acetylalanine modification. Residues cysteine 46 and cysteine 53 are each lipidated (S-palmitoyl cysteine). Position 67 is a phosphotyrosine (tyrosine 67). The Nucleophile role is filled by cysteine 106. Cysteine 106 is subject to Cysteine sulfinic acid (-SO2H); alternate. Residue cysteine 106 is the site of S-palmitoyl cysteine; alternate attachment. Histidine 126 is an active-site residue. Lysine 130 is covalently cross-linked (Glycyl lysine isopeptide (Lys-Gly) (interchain with G-Cter in SUMO)). Residue lysine 148 is modified to N6-acetyllysine. The residue at position 182 (lysine 182) is an N6-succinyllysine.

It belongs to the peptidase C56 family. In terms of assembly, homodimer. Binds EFCAB6/DJBP and PIAS2. Part of a ternary complex containing PARK7, EFCAB6/DJBP and AR. Binds to HIPK1. Interacts (via N-terminus) with OTUD7B. Interacts with BBS1, CLCF1 and MTERF. Interacts (via C-terminus) with NCF1; the interaction is enhanced by LPS and modulates NCF1 phosphorylation and membrane translocation. Interacts with NENF. Deglycase activity does not require glutathione as a cofactor, however, glycated glutathione constitutes a PARK7 substrate. is required as a cofactor. In terms of processing, sumoylated on Lys-130 by PIAS2 or PIAS4; which is essential for cell-growth promoting activity and transforming activity. Post-translationally, undergoes cleavage of a C-terminal peptide and subsequent activation of protease activity in response to oxidative stress. As to expression, expressed in erythroblasts and in mature red blood cells from peripheral blood (at protein level). In pancreas, expression is higher in islets than surrounding exocrine tissues.

It is found in the cell membrane. The protein localises to the cytoplasm. Its subcellular location is the membrane raft. The protein resides in the nucleus. It localises to the mitochondrion. It is found in the endoplasmic reticulum. It catalyses the reaction N(omega)-(1-hydroxy-2-oxopropyl)-L-arginyl-[protein] + H2O = lactate + L-arginyl-[protein] + H(+). It carries out the reaction N(6)-(1-hydroxy-2-oxopropyl)-L-lysyl-[protein] + H2O = lactate + L-lysyl-[protein] + H(+). The enzyme catalyses S-(1-hydroxy-2-oxopropyl)-L-cysteinyl-[protein] + H2O = lactate + L-cysteinyl-[protein] + H(+). The catalysed reaction is N(omega)-(1-hydroxy-2-oxoethyl)-L-arginyl-[protein] + H2O = L-arginyl-[protein] + glycolate + H(+). It catalyses the reaction N(6)-(1-hydroxy-2-oxoethyl)-L-lysyl-[protein] + H2O = glycolate + L-lysyl-[protein] + H(+). It carries out the reaction S-(1-hydroxy-2-oxoethyl)-L-cysteinyl-[protein] + H2O = glycolate + L-cysteinyl-[protein] + H(+). The enzyme catalyses N(2)-(1-hydroxy-2-oxopropyl)-dGTP + H2O = lactate + dGTP + H(+). The catalysed reaction is N(2)-(1-hydroxy-2-oxopropyl)-GTP + H2O = lactate + GTP + H(+). It catalyses the reaction N(2)-(1-hydroxy-2-oxopropyl)-GDP + H2O = lactate + GDP + H(+). It carries out the reaction N(2)-(1-hydroxy-2-oxopropyl)-GMP + H2O = lactate + GMP + H(+). The enzyme catalyses N(2)-(1-hydroxy-2-oxoethyl)-dGTP + H2O = dGTP + glycolate + H(+). The catalysed reaction is N(2)-(1-hydroxy-2-oxoethyl)-GTP + H2O = glycolate + GTP + H(+). It catalyses the reaction N(2)-(1-hydroxy-2-oxoethyl)-GDP + H2O = glycolate + GDP + H(+). It carries out the reaction N(2)-(1-hydroxy-2-oxoethyl)-GMP + H2O = glycolate + GMP + H(+). The enzyme catalyses an N(2)-(1-hydroxy-2-oxopropyl)-guanosine in RNA + H2O = a guanosine in RNA + lactate + H(+). The catalysed reaction is an N(2)-(1-hydroxy-2-oxopropyl)-2'-deoxyguanosine in DNA + H2O = a 2'-deoxyguanosine in DNA + lactate + H(+). It catalyses the reaction an N(2)-(1-hydroxy-2-oxoethyl)-guanosine in RNA + H2O = a guanosine in RNA + glycolate + H(+). It carries out the reaction an N(2)-(1-hydroxy-2-oxoethyl)-2'-deoxyguanosine in DNA + H2O = a 2'-deoxyguanosine in DNA + glycolate + H(+). Functionally, multifunctional protein with controversial molecular function which plays an important role in cell protection against oxidative stress and cell death acting as oxidative stress sensor and redox-sensitive chaperone and protease. It is involved in neuroprotective mechanisms like the stabilization of NFE2L2 and PINK1 proteins, male fertility as a positive regulator of androgen signaling pathway as well as cell growth and transformation through, for instance, the modulation of NF-kappa-B signaling pathway. Has been described as a protein and nucleotide deglycase that catalyzes the deglycation of the Maillard adducts formed between amino groups of proteins or nucleotides and reactive carbonyl groups of glyoxals. But this function is rebuted by other works. As a protein deglycase, repairs methylglyoxal- and glyoxal-glycated proteins, and releases repaired proteins and lactate or glycolate, respectively. Deglycates cysteine, arginine and lysine residues in proteins, and thus reactivates these proteins by reversing glycation by glyoxals. Acts on early glycation intermediates (hemithioacetals and aminocarbinols), preventing the formation of advanced glycation endproducts (AGE) that cause irreversible damage. Also functions as a nucleotide deglycase able to repair glycated guanine in the free nucleotide pool (GTP, GDP, GMP, dGTP) and in DNA and RNA. Is thus involved in a major nucleotide repair system named guanine glycation repair (GG repair), dedicated to reversing methylglyoxal and glyoxal damage via nucleotide sanitization and direct nucleic acid repair. Protects histones from adduction by methylglyoxal, controls the levels of methylglyoxal-derived argininine modifications on chromatin. Able to remove the glycations and restore histone 3, histone glycation disrupts both local and global chromatin architecture by altering histone-DNA interactions as well as histone acetylation and ubiquitination levels. Displays a very low glyoxalase activity that may reflect its deglycase activity. Eliminates hydrogen peroxide and protects cells against hydrogen peroxide-induced cell death. Required for correct mitochondrial morphology and function as well as for autophagy of dysfunctional mitochondria. Plays a role in regulating expression or stability of the mitochondrial uncoupling proteins SLC25A14 and SLC25A27 in dopaminergic neurons of the substantia nigra pars compacta and attenuates the oxidative stress induced by calcium entry into the neurons via L-type channels during pacemaking. Regulates astrocyte inflammatory responses, may modulate lipid rafts-dependent endocytosis in astrocytes and neuronal cells. In pancreatic islets, involved in the maintenance of mitochondrial reactive oxygen species (ROS) levels and glucose homeostasis in an age- and diet dependent manner. Protects pancreatic beta cells from cell death induced by inflammatory and cytotoxic setting. Binds to a number of mRNAs containing multiple copies of GG or CC motifs and partially inhibits their translation but dissociates following oxidative stress. Metal-binding protein able to bind copper as well as toxic mercury ions, enhances the cell protection mechanism against induced metal toxicity. In macrophages, interacts with the NADPH oxidase subunit NCF1 to direct NADPH oxidase-dependent ROS production, and protects against sepsis. In Mus musculus (Mouse), this protein is Parkinson disease protein 7 homolog.